Consider the following 54-residue polypeptide: MAVPKKRVSKSKRDMRKTTWKNKASKEAKKALSLAKSVSTGKSKSKGFQIKSSN.

The segment covering 1–20 (MAVPKKRVSKSKRDMRKTTW) has biased composition (basic residues). A disordered region spans residues 1-54 (MAVPKKRVSKSKRDMRKTTWKNKASKEAKKALSLAKSVSTGKSKSKGFQIKSSN). Residues 31 to 42 (ALSLAKSVSTGK) show a composition bias toward low complexity.

The protein belongs to the bacterial ribosomal protein bL32 family.

It localises to the plastid. The protein localises to the chloroplast. In Chlorokybus atmophyticus (Soil alga), this protein is Large ribosomal subunit protein bL32c.